A 73-amino-acid polypeptide reads, in one-letter code: MAKKDGVIEIEGVVTEALPNAMFRVELTNKHIVLAHISGKMRQHYIRILPEDRVVVELSPYDLTRGRIVYRYK.

The 73-residue stretch at 1–73 (MAKKDGVIEI…TRGRIVYRYK (73 aa)) folds into the S1-like domain.

This sequence belongs to the IF-1 family. Component of the 30S ribosomal translation pre-initiation complex which assembles on the 30S ribosome in the order IF-2 and IF-3, IF-1 and N-formylmethionyl-tRNA(fMet); mRNA recruitment can occur at any time during PIC assembly.

Its subcellular location is the cytoplasm. Functionally, one of the essential components for the initiation of protein synthesis. Stabilizes the binding of IF-2 and IF-3 on the 30S subunit to which N-formylmethionyl-tRNA(fMet) subsequently binds. Helps modulate mRNA selection, yielding the 30S pre-initiation complex (PIC). Upon addition of the 50S ribosomal subunit IF-1, IF-2 and IF-3 are released leaving the mature 70S translation initiation complex. The polypeptide is Translation initiation factor IF-1 (Arthrobacter sp. (strain FB24)).